The following is a 580-amino-acid chain: Membrane protein insertase YidC (580 aa).

The next 6 membrane-spanning stretches (helical) occupy residues 5-25 (SVTG…FMSP), 259-279 (KYFV…LDGS), 362-382 (GLII…LSLA), 427-447 (LGGC…FYVF), 477-497 (IPMY…TVFV), and 513-533 (IMLY…PSGL).

It belongs to the OXA1/ALB3/YidC family. Type 1 subfamily. As to quaternary structure, interacts with the Sec translocase complex via SecD. Specifically interacts with transmembrane segments of nascent integral membrane proteins during membrane integration.

The protein resides in the cell inner membrane. Functionally, required for the insertion and/or proper folding and/or complex formation of integral membrane proteins into the membrane. Involved in integration of membrane proteins that insert both dependently and independently of the Sec translocase complex, as well as at least some lipoproteins. Aids folding of multispanning membrane proteins. In Chlorobium phaeovibrioides (strain DSM 265 / 1930) (Prosthecochloris vibrioformis (strain DSM 265)), this protein is Membrane protein insertase YidC.